The primary structure comprises 61 residues: Small ribosomal subunit protein uS14 (61 aa).

Cys-24, Cys-27, Cys-40, and Cys-43 together coordinate Zn(2+).

The protein belongs to the universal ribosomal protein uS14 family. Zinc-binding uS14 subfamily. As to quaternary structure, part of the 30S ribosomal subunit. Contacts proteins S3 and S10. Zn(2+) serves as cofactor.

Functionally, binds 16S rRNA, required for the assembly of 30S particles and may also be responsible for determining the conformation of the 16S rRNA at the A site. The protein is Small ribosomal subunit protein uS14 of Desulforamulus reducens (strain ATCC BAA-1160 / DSM 100696 / MI-1) (Desulfotomaculum reducens).